A 736-amino-acid chain; its full sequence is Catalase-peroxidase (736 aa).

The segment at 1–21 is disordered; it reads MSNEQKCPFSGTHGARTTVGT. Residues 96–224 constitute a cross-link (tryptophyl-tyrosyl-methioninium (Trp-Tyr) (with M-250)); that stretch reads WHSAGTYRTG…LAAVQMGLIY (129 aa). Histidine 97 acts as the Proton acceptor in catalysis. The segment at residues 224-250 is a cross-link (tryptophyl-tyrosyl-methioninium (Tyr-Met) (with W-96)); the sequence is YVNPEGPDGNPDPVASGRDIRETFARM. Position 265 (histidine 265) interacts with heme b.

Belongs to the peroxidase family. Peroxidase/catalase subfamily. In terms of assembly, homodimer or homotetramer. The cofactor is heme b. In terms of processing, formation of the three residue Trp-Tyr-Met cross-link is important for the catalase, but not the peroxidase activity of the enzyme.

It carries out the reaction H2O2 + AH2 = A + 2 H2O. The catalysed reaction is 2 H2O2 = O2 + 2 H2O. Functionally, bifunctional enzyme with both catalase and broad-spectrum peroxidase activity. This is Catalase-peroxidase from Dechloromonas aromatica (strain RCB).